Consider the following 176-residue polypeptide: Nudix hydrolase 18, mitochondrial (176 aa).

The transit peptide at M1 to Q21 directs the protein to the mitochondrion. The region spanning V22–V153 is the Nudix hydrolase domain. The Nudix box motif lies at G60–G81. E75 and E79 together coordinate Mg(2+).

It belongs to the Nudix hydrolase family. Mg(2+) is required as a cofactor. Mn(2+) serves as cofactor. As to expression, expressed in roots, stems and inflorescences.

The protein localises to the mitochondrion. Its function is as follows. Probably mediates the hydrolysis of some nucleoside diphosphate derivatives. The polypeptide is Nudix hydrolase 18, mitochondrial (NUDT18) (Arabidopsis thaliana (Mouse-ear cress)).